Here is a 320-residue protein sequence, read N- to C-terminus: ATP-dependent 6-phosphofructokinase isozyme 1 (320 aa).

An ATP-binding site is contributed by Gly-12. Residues 22–26 and 55–60 contribute to the ADP site; these read RGVVR and RYSVSD. ATP-binding positions include 73–74 and 103–106; these read RF and GDGS. Asp-104 serves as a coordination point for Mg(2+). 126-128 contacts substrate; sequence TID. Residue Asp-128 is the Proton acceptor of the active site. Arg-155 is an ADP binding site. Residues Arg-163 and 170 to 172 each bind substrate; that span reads MGR. ADP is bound by residues 186-188, Lys-212, and 214-216; these read GCE and KKH. Substrate contacts are provided by residues Glu-223, Arg-244, and 250-253; that span reads HIQR.

The protein belongs to the phosphofructokinase type A (PFKA) family. ATP-dependent PFK group I subfamily. Prokaryotic clade 'B1' sub-subfamily. Homotetramer. Requires Mg(2+) as cofactor.

Its subcellular location is the cytoplasm. It carries out the reaction beta-D-fructose 6-phosphate + ATP = beta-D-fructose 1,6-bisphosphate + ADP + H(+). It participates in carbohydrate degradation; glycolysis; D-glyceraldehyde 3-phosphate and glycerone phosphate from D-glucose: step 3/4. Its activity is regulated as follows. Allosterically activated by ADP and other diphosphonucleosides, and allosterically inhibited by phosphoenolpyruvate. Catalyzes the phosphorylation of D-fructose 6-phosphate to fructose 1,6-bisphosphate by ATP, the first committing step of glycolysis. The sequence is that of ATP-dependent 6-phosphofructokinase isozyme 1 from Shigella boydii serotype 18 (strain CDC 3083-94 / BS512).